Here is a 108-residue protein sequence, read N- to C-terminus: uncharacterized protein (108 aa).

Helical transmembrane passes span 36–56, 58–78, and 88–108; these read LAIMFITFVFLLQVNGTDKMI, FIFVFTGTVIGVTYSVCKLLF, and IVFLIIFVCLFVWGIITFFNL.

The protein resides in the cell membrane. This is an uncharacterized protein from Alkalihalophilus pseudofirmus (strain ATCC BAA-2126 / JCM 17055 / OF4) (Bacillus pseudofirmus).